Reading from the N-terminus, the 87-residue chain is MVKNSVISVIFQKEKKGSVEFQVFNFTNKIRRLTSHLELHKKDYLSQRGLKKILGKRQRLLAYLAKKNRVRYKELINQLDIRETKTR.

The protein belongs to the universal ribosomal protein uS15 family. In terms of assembly, part of the 30S ribosomal subunit.

The protein localises to the plastid. Its subcellular location is the chloroplast. The sequence is that of Small ribosomal subunit protein uS15c (rps15) from Solanum tuberosum (Potato).